We begin with the raw amino-acid sequence, 427 residues long: Kallistatin (427 aa).

Residues 1 to 20 (MHLIDYLLLLLVGLLALSHG) form the signal peptide. N-linked (GlcNAc...) asparagine glycans are attached at residues N33, N108, N157, and N238.

This sequence belongs to the serpin family. Monomer and some homodimers.

It is found in the secreted. Inhibits human amidolytic and kininogenase activities of tissue kallikrein. The chain is Kallistatin (SERPINA4) from Pongo abelii (Sumatran orangutan).